Here is a 397-residue protein sequence, read N- to C-terminus: S-adenosylmethionine synthase (397 aa).

Position 17 (His17) interacts with ATP. Asp19 is a binding site for Mg(2+). Residue Glu45 participates in K(+) binding. L-methionine-binding residues include Glu58 and Gln101. The flexible loop stretch occupies residues 101–111 (QSPDIAQGVDK). ATP contacts are provided by residues 176 to 178 (DGK), 243 to 244 (RF), Asp252, 258 to 259 (RK), and Lys279. Asp252 serves as a coordination point for L-methionine. Lys283 contacts L-methionine.

This sequence belongs to the AdoMet synthase family. In terms of assembly, homotetramer; dimer of dimers. Mg(2+) serves as cofactor. The cofactor is K(+).

The protein resides in the cytoplasm. The catalysed reaction is L-methionine + ATP + H2O = S-adenosyl-L-methionine + phosphate + diphosphate. The protein operates within amino-acid biosynthesis; S-adenosyl-L-methionine biosynthesis; S-adenosyl-L-methionine from L-methionine: step 1/1. Catalyzes the formation of S-adenosylmethionine (AdoMet) from methionine and ATP. The overall synthetic reaction is composed of two sequential steps, AdoMet formation and the subsequent tripolyphosphate hydrolysis which occurs prior to release of AdoMet from the enzyme. This chain is S-adenosylmethionine synthase, found in Staphylococcus aureus.